Consider the following 385-residue polypeptide: MSEYLFTSESVSEGHPDKMADQISDAVLDAILAEDPRGRIACETMIKTGIIILGGEVTTSANIDYEAVARETVKRIGYKHHEMGFDGETCGVINILGKQSVDIAQGVDRDHPEEQGAGDQGLMFGYASNETDVLMPAPITYAHRLVQRQAEVRCNGQLPWLRPDAKSQVTLRYVDGRPVAVDTVVLSTQHAPDLTQAQVHEAVIEEIIKPVLPEQWITGETRYLVNPTGRFVIGGPVGDCGLTGRKIIVDTYGGMARHGGGCFSGKDPSKVDRSAAYACRYVAKNIVAAGLAERCEIQVSYAIGVAEPTSISVETFGTGRVDSEKLTRIVREHFDLRPYGILKMLDLIRPIYTATAAYGHFGREDEGFPWERIDRAEEIRDAAGL.

Histidine 15 lines the ATP pocket. Aspartate 17 contributes to the Mg(2+) binding site. Glutamate 43 is a binding site for K(+). Glutamate 56 and glutamine 99 together coordinate L-methionine. A flexible loop region spans residues 99 to 109; that stretch reads QSVDIAQGVDR. Residues 164 to 166, 230 to 231, aspartate 239, 245 to 246, and lysine 266 contribute to the ATP site; these read DAK, RF, and RK. Aspartate 239 serves as a coordination point for L-methionine. Position 270 (lysine 270) interacts with L-methionine.

It belongs to the AdoMet synthase family. Homotetramer; dimer of dimers. The cofactor is Mg(2+). K(+) is required as a cofactor.

Its subcellular location is the cytoplasm. It carries out the reaction L-methionine + ATP + H2O = S-adenosyl-L-methionine + phosphate + diphosphate. The protein operates within amino-acid biosynthesis; S-adenosyl-L-methionine biosynthesis; S-adenosyl-L-methionine from L-methionine: step 1/1. In terms of biological role, catalyzes the formation of S-adenosylmethionine (AdoMet) from methionine and ATP. The overall synthetic reaction is composed of two sequential steps, AdoMet formation and the subsequent tripolyphosphate hydrolysis which occurs prior to release of AdoMet from the enzyme. The polypeptide is S-adenosylmethionine synthase (Alkalilimnicola ehrlichii (strain ATCC BAA-1101 / DSM 17681 / MLHE-1)).